The chain runs to 262 residues: Kallikrein-1 (262 aa).

A signal peptide spans Met1–Ala18. Residues Pro19–Arg24 constitute a propeptide, activation peptide. The Peptidase S1 domain maps to Ile25 to Ala259. Cystine bridges form between Cys31-Cys174, Cys50-Cys66, Cys153-Cys220, Cys185-Cys199, and Cys210-Cys235. His65 serves as the catalytic Charge relay system. The O-linked (GalNAc...) serine glycan is linked to Ser93. N-linked (GlcNAc...) asparagine glycosylation is present at Asn102. Ser104 is a glycosylation site (O-linked (GalNAc...) serine). Residue Asn108 is glycosylated (N-linked (GlcNAc...) asparagine). Catalysis depends on Asp120, which acts as the Charge relay system. An N-linked (GlcNAc...) asparagine; partial glycan is attached at Asn165. Residue Ser167 is glycosylated (O-linked (GalNAc...) serine). The active-site Charge relay system is the Ser214.

Belongs to the peptidase S1 family. Kallikrein subfamily. In terms of processing, the O-linked polysaccharides on Ser-93, Ser-104 and Ser-167 are probably the mucin type linked to GalNAc. In PubMed:3163150, GalNAc was detected with the corresponding peptides but not located. As to expression, isoform 2 is expressed in pancreas, salivary glands, kidney, colon, prostate gland, testis, spleen and the colon adenocarcinoma cell line T84.

The enzyme catalyses Preferential cleavage of Arg-|-Xaa bonds in small molecule substrates. Highly selective action to release kallidin (lysyl-bradykinin) from kininogen involves hydrolysis of Met-|-Xaa or Leu-|-Xaa.. Its function is as follows. Glandular kallikreins cleave Met-Lys and Arg-Ser bonds in kininogen to release Lys-bradykinin. Functionally, (Microbial infection) Cleaves Neisseria meningitidis NHBA in saliva; Neisseria is an obligate commensal of the nasopharyngeal mucosa. This chain is Kallikrein-1 (KLK1), found in Homo sapiens (Human).